The following is a 147-amino-acid chain: UPF0306 protein YhbP (147 aa).

It belongs to the UPF0306 family.

The chain is UPF0306 protein YhbP from Salmonella schwarzengrund (strain CVM19633).